Consider the following 391-residue polypeptide: Eukaryotic initiation factor 4A-3 (391 aa).

The Q motif motif lies at 18–46 (ASFAEMGIKDDLLRGVYQYGFEKPSAIQQ). The region spanning 49–219 (VLPIISGRDV…SKFMTDPVRI (171 aa)) is the Helicase ATP-binding domain. 62–69 (AQSGTGKT) is a binding site for ATP. The short motif at 167–170 (DESD) is the DEAD box element. In terms of domain architecture, Helicase C-terminal spans 230–391 (GIKQFFVAVE…EMPMNVADLI (162 aa)).

Belongs to the DEAD box helicase family. eIF4A subfamily. In terms of assembly, eIF4F is a multi-subunit complex, the composition of which varies with external and internal environmental conditions. It is composed of at least EIF4A, EIF4E and EIF4G.

The catalysed reaction is ATP + H2O = ADP + phosphate + H(+). Its function is as follows. ATP-dependent RNA helicase which is a subunit of the eIF4F complex involved in cap recognition and is required for mRNA binding to ribosome. In the current model of translation initiation, eIF4A unwinds RNA secondary structures in the 5'-UTR of mRNAs which is necessary to allow efficient binding of the small ribosomal subunit, and subsequent scanning for the initiator codon. This chain is Eukaryotic initiation factor 4A-3, found in Nicotiana plumbaginifolia (Leadwort-leaved tobacco).